Reading from the N-terminus, the 138-residue chain is Small ribosomal subunit protein uS11c (138 aa).

The disordered stretch occupies residues 1–21 (MAKSISKIGSRKNARIGSRKQ). The span at 9 to 21 (GSRKNARIGSRKQ) shows a compositional bias: basic residues.

Belongs to the universal ribosomal protein uS11 family. In terms of assembly, part of the 30S ribosomal subunit.

The protein resides in the plastid. Its subcellular location is the chloroplast. The sequence is that of Small ribosomal subunit protein uS11c from Cicer arietinum (Chickpea).